The following is an 880-amino-acid chain: Pyruvate, phosphate dikinase (880 aa).

The interval 1 to 348 is N-terminal; that stretch reads MNKLIYYFGN…LYILQTRTAK (348 aa). Arginine 97 contacts ATP. The segment at 349–405 is linker 1; the sequence is RTAIAAINIAVQMVEEKLISKEQALMRIDPESLNQLLHTRIDYSKKLTAIAEGLPAS. The segment at 406 to 503 is central; that stretch reads PGAATGIVVF…VIKQGDIITI (98 aa). Threonine 458 carries the phosphothreonine; by PDRP1 modification. Histidine 460 (tele-phosphohistidine intermediate) is an active-site residue. Residues 504-538 form a linker 2 region; the sequence is DGGSGKIFLGEMPLIQPTFSEESTLILDWADEISS. The segment at 539-879 is C-terminal; sequence LKVRANAETV…AAAQAKIKQG (341 aa). Substrate contacts are provided by arginine 566, arginine 622, glutamate 750, glycine 771, threonine 772, asparagine 773, and aspartate 774. Residue glutamate 750 participates in Mg(2+) binding. Aspartate 774 serves as a coordination point for Mg(2+). Catalysis depends on cysteine 836, which acts as the Proton donor.

The protein belongs to the PEP-utilizing enzyme family. Homodimer. Mg(2+) serves as cofactor. In terms of processing, phosphorylation of Thr-458 in the dark inactivates the enzyme. Dephosphorylation upon light stimulation reactivates the enzyme.

It carries out the reaction pyruvate + phosphate + ATP = phosphoenolpyruvate + AMP + diphosphate + H(+). With respect to regulation, activated by light-induced dephosphorylation. Inhibited by dark-induced phosphorylation. Both reactions are catalyzed by PDRP1. Its function is as follows. Catalyzes the reversible phosphorylation of pyruvate and phosphate. This is Pyruvate, phosphate dikinase (ppdK) from Rickettsia typhi (strain ATCC VR-144 / Wilmington).